The chain runs to 166 residues: KH homology domain-containing protein 1A (166 aa).

One can recognise a KH; atypical domain in the interval 19 to 78 (PLVFDMEEDKEDYIFGPHDEYLHTLEVHSNTLIQLERWFTPTGQTRVTVVGPLKARLWVM).

The protein belongs to the KHDC1 family.

The protein localises to the cytoplasm. Functionally, has pro-apoptotic activity. The chain is KH homology domain-containing protein 1A (Khdc1a) from Mus musculus (Mouse).